A 189-amino-acid chain; its full sequence is MPRASEIKKGFAINVDGKTVLVKDIEVTTPGGRGGQKIYRFRGHDVATGVKTEVRHKADEIVETIDVTKRAVMFSYVDGNEYIFMDNEDYTQFIFNGEMIEDELLFINEDTQGMYAILIDGTAATLELPTSVELVIEETDPSIKGASASARTKPARLSTGLTVQVPEYIATGDKVVVNTAERKYMNRAS.

This sequence belongs to the elongation factor P family.

This is Elongation factor P-like protein from Vibrio atlanticus (strain LGP32) (Vibrio splendidus (strain Mel32)).